The primary structure comprises 845 residues: Envelope glycoprotein gp160 (845 aa).

The N-terminal stretch at 1–28 (METQRNYPSLWRWGTLILGMLLICSAAQ) is a signal peptide. Over 29-673 (NLWVTVYYGV…ISHWLWYIKI (645 aa)) the chain is Extracellular. C50 and C70 are disulfide-bonded. 20 N-linked (GlcNAc...) asparagine; by host glycosylation sites follow: N84, N126, N132, N133, N136, N149, N153, N179, N180, N190, N223, N227, N234, N255, N269, N286, N294, N324, N331, and N347. Cystine bridges form between C115-C198, C122-C189, C127-C150, C211-C240, and C221-C232. The tract at residues 127-149 (CTNVRNNTSNSTSSMEAGGELTN) is V1. The tract at residues 150–189 (CSFNVTTVLRDKQQKVHALFYRLDVVPIDNNSTQYRLINC) is V2. The segment at 289–322 (CTRPNNNTRTSIHLGPGRAFYATGDIIGDIRQAH) is V3. Cysteines 289 and 323 form a disulfide. The segment at 355-365 (NSGGDMEVRTH) is CD4-binding loop. 2 disulfide bridges follow: C369-C434 and C376-C407. Residues 376 to 407 (CNTSGLFNSSWEMHTNYTSNDTKGNENITLPC) form a V4 region. N-linked (GlcNAc...) asparagine; by host glycosylation is found at N377, N383, N391, N395, N402, N437, N449, and N454. V5 stretches follow at residues 450–460 (ASAENYTFRPG) and 452–460 (AENYTFRPG). Residues 501–521 (AVGMGASFLGFLGAAGSTMGA) are fusion peptide. An immunosuppression region spans residues 563–581 (KQLQARVLAVERYLRDQQL). A disulfide bridge connects residues C587 and C593. Residues N600, N605, N614, and N626 are each glycosylated (N-linked (GlcNAc...) asparagine; by host). Positions 622-656 (KQISNYTEEIYRLLEVSQTQQEKNEQDLLALDKWA) form a coiled coil. The interval 651–672 (ALDKWASLWTWFDISHWLWYIK) is MPER; binding to GalCer. A helical transmembrane segment spans residues 674 to 694 (FIMIVGGLIGLRIIFAVLSIV). Residues 695–845 (NRVRQGYSPL…IRQGFERSLL (151 aa)) lie on the Cytoplasmic side of the membrane. The YXXL motif; contains endocytosis signal motif lies at 701–704 (YSPL). Positions 708-731 (TLVPNPRGPDRPEGTEEGGGEQDR) are disordered. A Di-leucine internalization motif motif is present at residues 844–845 (LL).

The protein belongs to the HIV-1 env protein family. As to quaternary structure, the mature envelope protein (Env) consists of a homotrimer of non-covalently associated gp120-gp41 heterodimers. The resulting complex protrudes from the virus surface as a spike. There seems to be as few as 10 spikes on the average virion. Interacts with host CD4, CCR5 and CXCR4. Gp120 also interacts with the C-type lectins CD209/DC-SIGN and CLEC4M/DC-SIGNR (collectively referred to as DC-SIGN(R)). Gp120 and gp41 interact with GalCer. Gp120 interacts with host ITGA4/ITGB7 complex; on CD4+ T-cells, this interaction results in rapid activation of integrin ITGAL/LFA-1, which facilitates efficient cell-to-cell spreading of HIV-1. Gp120 interacts with cell-associated heparan sulfate; this interaction increases virus infectivity on permissive cells and may be involved in infection of CD4- cells. The mature envelope protein (Env) consists of a homotrimer of non-covalently associated gp120-gp41 heterodimers. The resulting complex protrudes from the virus surface as a spike. There seems to be as few as 10 spikes on the average virion. In terms of processing, highly glycosylated by host. The high number of glycan on the protein is reffered to as 'glycan shield' because it contributes to hide protein sequence from adaptive immune system. Palmitoylation of the transmembrane protein and of Env polyprotein (prior to its proteolytic cleavage) is essential for their association with host cell membrane lipid rafts. Palmitoylation is therefore required for envelope trafficking to classical lipid rafts, but not for viral replication. Post-translationally, specific enzymatic cleavages in vivo yield mature proteins. Envelope glycoproteins are synthesized as an inactive precursor that is heavily N-glycosylated and processed likely by host cell furin in the Golgi to yield the mature SU and TM proteins. The cleavage site between SU and TM requires the minimal sequence [KR]-X-[KR]-R. About 2 of the 9 disulfide bonds of gp41 are reduced by P4HB/PDI, following binding to CD4 receptor.

It is found in the virion membrane. It localises to the host cell membrane. Its subcellular location is the host endosome membrane. In terms of biological role, oligomerizes in the host endoplasmic reticulum into predominantly trimers. In a second time, gp160 transits in the host Golgi, where glycosylation is completed. The precursor is then proteolytically cleaved in the trans-Golgi and thereby activated by cellular furin or furin-like proteases to produce gp120 and gp41. Its function is as follows. Attaches the virus to the host lymphoid cell by binding to the primary receptor CD4. This interaction induces a structural rearrangement creating a high affinity binding site for a chemokine coreceptor like CXCR4 and/or CCR5. Acts as a ligand for CD209/DC-SIGN and CLEC4M/DC-SIGNR, which are respectively found on dendritic cells (DCs), and on endothelial cells of liver sinusoids and lymph node sinuses. These interactions allow capture of viral particles at mucosal surfaces by these cells and subsequent transmission to permissive cells. HIV subverts the migration properties of dendritic cells to gain access to CD4+ T-cells in lymph nodes. Virus transmission to permissive T-cells occurs either in trans (without DCs infection, through viral capture and transmission), or in cis (following DCs productive infection, through the usual CD4-gp120 interaction), thereby inducing a robust infection. In trans infection, bound virions remain infectious over days and it is proposed that they are not degraded, but protected in non-lysosomal acidic organelles within the DCs close to the cell membrane thus contributing to the viral infectious potential during DCs' migration from the periphery to the lymphoid tissues. On arrival at lymphoid tissues, intact virions recycle back to DCs' cell surface allowing virus transmission to CD4+ T-cells. Acts as a class I viral fusion protein. Under the current model, the protein has at least 3 conformational states: pre-fusion native state, pre-hairpin intermediate state, and post-fusion hairpin state. During fusion of viral and target intracellular membranes, the coiled coil regions (heptad repeats) assume a trimer-of-hairpins structure, positioning the fusion peptide in close proximity to the C-terminal region of the ectodomain. The formation of this structure appears to drive apposition and subsequent fusion of viral and target cell membranes. Complete fusion occurs in host cell endosomes and is dynamin-dependent, however some lipid transfer might occur at the plasma membrane. The virus undergoes clathrin-dependent internalization long before endosomal fusion, thus minimizing the surface exposure of conserved viral epitopes during fusion and reducing the efficacy of inhibitors targeting these epitopes. Membranes fusion leads to delivery of the nucleocapsid into the cytoplasm. The polypeptide is Envelope glycoprotein gp160 (Homo sapiens (Human)).